Consider the following 252-residue polypeptide: MAIDNRLLPNTLAAQAAALPSAWSQALAAPGVAQALDHIINHVEARLAAGATVYPATPLRALSSLAPSEVRVVILGQDPYHGPGQAQGLAFSVPDDCKCPPSLRNIFKEIGRDYALDGKPGHDLTPWVKQGVLLLNTALTVEDGQPASHAKRGWETVTDALFTQVAQDPTPKVFLLWGAHAQAKAALLPPGHAHLVLSANHPSPLSATRAPTPFIGCGHFRLTNEWLEKQGQTLIDWTATFKKIPAQAEFRL.

Aspartate 78 serves as the catalytic Proton acceptor.

This sequence belongs to the uracil-DNA glycosylase (UDG) superfamily. UNG family.

It localises to the cytoplasm. The catalysed reaction is Hydrolyzes single-stranded DNA or mismatched double-stranded DNA and polynucleotides, releasing free uracil.. Its function is as follows. Excises uracil residues from the DNA which can arise as a result of misincorporation of dUMP residues by DNA polymerase or due to deamination of cytosine. The sequence is that of Uracil-DNA glycosylase from Bordetella avium (strain 197N).